The following is a 642-amino-acid chain: Threonine--tRNA ligase (642 aa).

The region spanning 1 to 61 (MPVITLPDGS…ENDATLAIIT (61 aa)) is the TGS domain. Residues 243–534 (DHRKIGKQLD…LTEEFAGFFP (292 aa)) form a catalytic region. Zn(2+) contacts are provided by C334, H385, and H511.

The protein belongs to the class-II aminoacyl-tRNA synthetase family. Homodimer. Zn(2+) is required as a cofactor.

It localises to the cytoplasm. It catalyses the reaction tRNA(Thr) + L-threonine + ATP = L-threonyl-tRNA(Thr) + AMP + diphosphate + H(+). Catalyzes the attachment of threonine to tRNA(Thr) in a two-step reaction: L-threonine is first activated by ATP to form Thr-AMP and then transferred to the acceptor end of tRNA(Thr). Also edits incorrectly charged L-seryl-tRNA(Thr). In Salmonella gallinarum (strain 287/91 / NCTC 13346), this protein is Threonine--tRNA ligase.